Reading from the N-terminus, the 283-residue chain is Bifunctional protein FolD (283 aa).

NADP(+) is bound by residues 164–166 (GRS), S189, and I230.

The protein belongs to the tetrahydrofolate dehydrogenase/cyclohydrolase family. In terms of assembly, homodimer.

The catalysed reaction is (6R)-5,10-methylene-5,6,7,8-tetrahydrofolate + NADP(+) = (6R)-5,10-methenyltetrahydrofolate + NADPH. It catalyses the reaction (6R)-5,10-methenyltetrahydrofolate + H2O = (6R)-10-formyltetrahydrofolate + H(+). It participates in one-carbon metabolism; tetrahydrofolate interconversion. Its function is as follows. Catalyzes the oxidation of 5,10-methylenetetrahydrofolate to 5,10-methenyltetrahydrofolate and then the hydrolysis of 5,10-methenyltetrahydrofolate to 10-formyltetrahydrofolate. This chain is Bifunctional protein FolD, found in Lactobacillus delbrueckii subsp. bulgaricus (strain ATCC 11842 / DSM 20081 / BCRC 10696 / JCM 1002 / NBRC 13953 / NCIMB 11778 / NCTC 12712 / WDCM 00102 / Lb 14).